The following is a 141-amino-acid chain: Hemoglobin subunit alpha (141 aa).

One can recognise a Globin domain in the interval 1 to 141 (VLSPADKSNV…VSTVLTSKYR (141 aa)). Serine 3 bears the Phosphoserine mark. 2 positions are modified to N6-succinyllysine: lysine 7 and lysine 11. The residue at position 16 (lysine 16) is an N6-acetyllysine; alternate. Position 16 is an N6-succinyllysine; alternate (lysine 16). Phosphotyrosine is present on tyrosine 24. Serine 35 is modified (phosphoserine). N6-succinyllysine is present on lysine 40. Serine 49 carries the phosphoserine modification. Histidine 58 serves as a coordination point for O2. Heme b is bound at residue histidine 87. Serine 102 is subject to Phosphoserine. Phosphothreonine is present on threonine 108. Phosphoserine occurs at positions 124 and 131. Phosphothreonine is present on residues threonine 134 and threonine 137. The residue at position 138 (serine 138) is a Phosphoserine.

Belongs to the globin family. Heterotetramer of two alpha chains and two beta chains. In terms of tissue distribution, red blood cells.

Involved in oxygen transport from the lung to the various peripheral tissues. In terms of biological role, hemopressin acts as an antagonist peptide of the cannabinoid receptor CNR1. Hemopressin-binding efficiently blocks cannabinoid receptor CNR1 and subsequent signaling. The chain is Hemoglobin subunit alpha (HBA) from Leontocebus fuscicollis (Brown-mantled tamarin).